The primary structure comprises 499 residues: Bifunctional purine biosynthesis protein PurH (499 aa).

Residues 1–144 form the MGS-like domain; that stretch reads MIKRALISVF…KNFKDVVVLT (144 aa).

The protein belongs to the PurH family.

The enzyme catalyses (6R)-10-formyltetrahydrofolate + 5-amino-1-(5-phospho-beta-D-ribosyl)imidazole-4-carboxamide = 5-formamido-1-(5-phospho-D-ribosyl)imidazole-4-carboxamide + (6S)-5,6,7,8-tetrahydrofolate. The catalysed reaction is IMP + H2O = 5-formamido-1-(5-phospho-D-ribosyl)imidazole-4-carboxamide. It participates in purine metabolism; IMP biosynthesis via de novo pathway; 5-formamido-1-(5-phospho-D-ribosyl)imidazole-4-carboxamide from 5-amino-1-(5-phospho-D-ribosyl)imidazole-4-carboxamide (10-formyl THF route): step 1/1. Its pathway is purine metabolism; IMP biosynthesis via de novo pathway; IMP from 5-formamido-1-(5-phospho-D-ribosyl)imidazole-4-carboxamide: step 1/1. The sequence is that of Bifunctional purine biosynthesis protein PurH from Clostridium botulinum (strain Okra / Type B1).